The following is a 297-amino-acid chain: Cyclin-dependent kinase 1 (297 aa).

The 290-residue stretch at 4-293 folds into the Protein kinase domain; sequence YQKVEKIGEG…AKRALQQNYL (290 aa). Residues 10–18 and Lys33 each bind ATP; that span reads IGEGTYGVV. Phosphothreonine is present on Thr14. At Tyr15 the chain carries Phosphotyrosine. Asp134 serves as the catalytic Proton acceptor. At Thr167 the chain carries Phosphothreonine.

It belongs to the protein kinase superfamily. CMGC Ser/Thr protein kinase family. CDC2/CDKX subfamily. Forms a stable but non-covalent complex with regulatory subunit suc1 and with a cyclin. Interacts with cyclin cdc13. Interacts with cyclin cig2. Interacts with cdc37.

It is found in the cytoplasm. The catalysed reaction is L-seryl-[protein] + ATP = O-phospho-L-seryl-[protein] + ADP + H(+). The enzyme catalyses L-threonyl-[protein] + ATP = O-phospho-L-threonyl-[protein] + ADP + H(+). Its activity is regulated as follows. Phosphorylation at Thr-14 or Tyr-15 inactivates the enzyme, while phosphorylation at Thr-167 activates it. Its function is as follows. Cyclin-dependent kinase that acts as a master regulator of the mitotic and meiotic cell cycles. Required to drive the G1-S and G2-M transitions, and initiation of premeiotic DNA replication and meiosis II. More than 200 substrates have been identified. Substrate specificity is in part regulated by the bound cyclin protein. When complexed with cyclin cig2, it drives the G1-S phase transition. When complexed with cyclin cdc13, it drives the G2-M transition and initiation of meiosis II. Its activity rises throughout the cell cycle and substrate specificity is further influenced by activity thresholds with more sensitive substrates phosphorylated earlier in the cell cycle than less sensitive substrates. Phosphorylates dis1 during metaphase to ensure proper microtubule dynamics and accurate chromosome segregation. Phosphorylates the repetitive C-terminus of the large subunit of RNA polymerase II rpb1. Inactivated by checkpoint signaling following detection of cellular damage, leading to cell cycle arrest to allow damage repair. Inactivated during G2 DNA damage checkpoint signaling. Inactivated in response to defective RNA splicing. This is Cyclin-dependent kinase 1 from Schizosaccharomyces pombe (strain 972 / ATCC 24843) (Fission yeast).